Reading from the N-terminus, the 119-residue chain is Large ribosomal subunit protein uL14 (119 aa).

The protein belongs to the universal ribosomal protein uL14 family. Part of the 50S ribosomal subunit. Forms a cluster with proteins L3 and L19. In the 70S ribosome, L14 and L19 interact and together make contacts with the 16S rRNA in bridges B5 and B8.

Binds to 23S rRNA. Forms part of two intersubunit bridges in the 70S ribosome. This chain is Large ribosomal subunit protein uL14, found in Wolbachia pipientis wMel.